We begin with the raw amino-acid sequence, 289 residues long: Phospholipase A1 (289 aa).

Residues 1–20 (MRAILRGLLPATLLPLAAYA) form the signal peptide. The Periplasmic portion of the chain corresponds to 21–52 (QEATIKEVHDAPAVRGSIIANMLQEHDNPFTL). Residues 53–65 (YPYDTNYLIYTNT) traverse the membrane as a beta stranded segment. Over 66-84 (SDLNKEAISTYNWSENARK) the chain is Extracellular. A beta stranded transmembrane segment spans residues 85-99 (DEVKFQLSLAFPLWR). Topologically, residues 100 to 105 (GILGPN) are periplasmic. The beta stranded transmembrane segment at 106 to 118 (SVLGASYTQKSWW) threads the bilayer. The Extracellular segment spans residues 119-128 (QLSNSKESSP). Residue S126 participates in Ca(2+) binding. A beta stranded transmembrane segment spans residues 129-148 (FRETNYEPQLFLGFATDYRF). Over 149–150 (AG) the chain is Periplasmic. The beta stranded transmembrane segment at 151-164 (WTLRDVEMGYNHDS) threads the bilayer. H162 (proton acceptor) is an active-site residue. S164 acts as the Nucleophile in catalysis. Over 165–173 (NGRSDPTSR) the chain is Extracellular. R167 and S172 together coordinate Ca(2+). Residues 174–186 (SWNRLYTRLMAEN) traverse the membrane as a beta stranded segment. The Periplasmic segment spans residues 187–188 (GN). Residues 189–198 (WLVEVKPWYV) form a beta stranded membrane-spanning segment. Topologically, residues 199–216 (IGSTDDNPDITKYMGYYQ) are extracellular. Residue D204 participates in Ca(2+) binding. Residues 217–223 (LKIGYHL) form a beta stranded membrane-spanning segment. The Periplasmic segment spans residues 224 to 225 (GE). The beta stranded transmembrane segment at 226-234 (AVLSAKGQY) threads the bilayer. Over 235-241 (NWNTGYG) the chain is Extracellular. The chain crosses the membrane as a beta stranded span at residues 242-250 (GAEVGLSYP). The Periplasmic segment spans residues 251 to 255 (VTKHV). A beta stranded transmembrane segment spans residues 256 to 265 (RLYTQVYSGY). Topologically, residues 266 to 274 (GESLIDYNF) are extracellular. A beta stranded membrane pass occupies residues 275–286 (NQTRVGVGVMLN). Residues 287–289 (DIF) are Periplasmic-facing.

Belongs to the phospholipase A1 family. In terms of assembly, homodimer; dimerization is reversible, and the dimeric form is the active one. Ca(2+) serves as cofactor.

The protein localises to the cell outer membrane. The enzyme catalyses a 1,2-diacyl-sn-glycero-3-phosphocholine + H2O = a 2-acyl-sn-glycero-3-phosphocholine + a fatty acid + H(+). It carries out the reaction a 1,2-diacyl-sn-glycero-3-phosphocholine + H2O = a 1-acyl-sn-glycero-3-phosphocholine + a fatty acid + H(+). Its function is as follows. Hydrolysis of phosphatidylcholine with phospholipase A2 (EC 3.1.1.4) and phospholipase A1 (EC 3.1.1.32) activities. This chain is Phospholipase A1 (pldA), found in Salmonella typhi.